The primary structure comprises 463 residues: MTSETRTLYSQLPAIDRLLHDSAFLSLRDRYGHTQVVDLLRRMLDDARDVIRNTQTLPDWYADWAQEAKLRLENAAQSALRPVINLTGTVLHTNLGRALQAQEAIEAVTQAMRAPVTLEYDLDGAGRGHRDRALATLLCRITGAEDACIVNNNAAAVLLMLAATASGKEVVVSRGELVEIGGAFRIPDVMRQAGCTLHEVGTTNRTHAKDYRQAVNENTGLLMKVHTSNYSIEGFTKTVEEAELVEIGRELDIPVVADLGSGSLVDLSQYGLPKEPMLQQLIAAGVSLVSFSGDKLLGGPQAGIIVGKKAMIAQLQSHPLKRALRADKMTLAALEATLRLYLHPEALAEKLPTLRLLTRSEASIREQAQRLQARLAARYGDEFALEVKPCLSQIGSGSLPVDRLPSAAMTFTPHDGRGSRLEALAARWRTLPVPVIGRIYDGRLWLDMRCLEDESRFMEMMLK.

Lysine 295 is modified (N6-(pyridoxal phosphate)lysine).

Belongs to the SelA family. Homodecamer; pentamer of dimers. Binds only one seryl-tRNA(Sec) per dimer. Requires pyridoxal 5'-phosphate as cofactor.

The protein resides in the cytoplasm. It carries out the reaction L-seryl-tRNA(Sec) + selenophosphate + H(+) = L-selenocysteinyl-tRNA(Sec) + phosphate. The protein operates within aminoacyl-tRNA biosynthesis; selenocysteinyl-tRNA(Sec) biosynthesis; selenocysteinyl-tRNA(Sec) from L-seryl-tRNA(Sec) (bacterial route): step 1/1. Its function is as follows. Converts seryl-tRNA(Sec) to selenocysteinyl-tRNA(Sec) required for selenoprotein biosynthesis. The polypeptide is L-seryl-tRNA(Sec) selenium transferase (Salmonella paratyphi A (strain AKU_12601)).